Reading from the N-terminus, the 120-residue chain is Large ribosomal subunit protein uL22 (120 aa).

Positions 1-20 (MFVNRRYTARGKNLPSSPKK) are disordered.

The protein belongs to the universal ribosomal protein uL22 family. As to quaternary structure, part of the 50S ribosomal subunit.

Functionally, this protein binds specifically to 23S rRNA; its binding is stimulated by other ribosomal proteins, e.g. L4, L17, and L20. It is important during the early stages of 50S assembly. It makes multiple contacts with different domains of the 23S rRNA in the assembled 50S subunit and ribosome. In terms of biological role, the globular domain of the protein is located near the polypeptide exit tunnel on the outside of the subunit, while an extended beta-hairpin is found that lines the wall of the exit tunnel in the center of the 70S ribosome. This is Large ribosomal subunit protein uL22 from Borrelia turicatae (strain 91E135).